Consider the following 398-residue polypeptide: MIIKPRVRGFICVSTHPTGCEANVREQIEYVKARGPIANGPKKVLVIGASTGYGLAARISAAFGSDAATLGVFFERAGSETKAGTAGWYNTAAFEKFATEQGLYATSINGDAFSDAVKQRTIEVIKRDLGQVDLVVYSLAAPKRTHPKSGEVFSSTLKPVGQAVNLRGIDTDKEVIRETVLEPATQDEIDHTVAVMGGEDWQMWIDALLEAGVLADGAKTTAFTYLGEKITHDIYWNGSIGAAKKDLDQKVLGIREKLAAKGGDARVSVLKAVVTQASSAIPMMPLYLSLLFKVMKEKGTHEGCIEQVYGLYKDSLYGAAPHLDDEGRLRADYKELDPEVQDRVQTLWSQVTNDNIYELTDFSGYKTDFLRLFGFEIAGVDYEADVNPDVQIPKLVQV.

NAD(+) contacts are provided by residues 48–53 (GASTGY), 74–75 (FE), 111–112 (DA), and 139–140 (LA). Y225 is a binding site for substrate. The active-site Proton donor is the Y235. Residues K244 and 273 to 275 (VVT) contribute to the NAD(+) site.

This sequence belongs to the TER reductase family. In terms of assembly, monomer.

The catalysed reaction is a 2,3-saturated acyl-[ACP] + NAD(+) = a (2E)-enoyl-[ACP] + NADH + H(+). Its pathway is lipid metabolism; fatty acid biosynthesis. Functionally, involved in the final reduction of the elongation cycle of fatty acid synthesis (FAS II). Catalyzes the reduction of a carbon-carbon double bond in an enoyl moiety that is covalently linked to an acyl carrier protein (ACP). The protein is Enoyl-[acyl-carrier-protein] reductase [NADH] of Paraburkholderia xenovorans (strain LB400).